A 121-amino-acid chain; its full sequence is MGNLIKELQDEQLRKEALTDFRVGDTIRVATKIVDGGKERTQVFQGTVMARRGGGAGETVALHRVAYGEGMEKSFLLHSPKIVGIEVVKRGKVSRARLYYLKGKTGKAAKVKEYIGPRAPK.

This sequence belongs to the bacterial ribosomal protein bL19 family.

This protein is located at the 30S-50S ribosomal subunit interface and may play a role in the structure and function of the aminoacyl-tRNA binding site. This Chlamydia caviae (strain ATCC VR-813 / DSM 19441 / 03DC25 / GPIC) (Chlamydophila caviae) protein is Large ribosomal subunit protein bL19.